Here is a 117-residue protein sequence, read N- to C-terminus: Large ribosomal subunit protein bL20 (117 aa).

It belongs to the bacterial ribosomal protein bL20 family.

Binds directly to 23S ribosomal RNA and is necessary for the in vitro assembly process of the 50S ribosomal subunit. It is not involved in the protein synthesizing functions of that subunit. The protein is Large ribosomal subunit protein bL20 of Limosilactobacillus reuteri (strain DSM 20016) (Lactobacillus reuteri).